The primary structure comprises 559 residues: MELRARGWWLLYAAAVLVACARGDPASKSRSCGEVRQIYGAKGFSLSDVPQAEISGEHLRICPQGYTCCTSEMEENLANRSRAELETALLEGTRALQATLAAQQRGFDDHFQRLLNDSERALQEAFPGAFGELYTQNAKAFRDLYAELRLYYGGANLHLQETLAEFWARLLERLFRQLHPQLLLPDDYLDCLGKQAEPLRPFGEAPRELRLRATRAFVAARTFVQGLGVAGDVVRKVAKVPLSPECSRAVMKLVYCAHCLGVPGARPCPDYCRNVLKGCLANQADLDAEWRNLLDSMVLITDKFWGPSGAESVVGGVHYWLAEAINALQDNSDTLTAKVIQGCGNPKVNPQGPGTEEKWPRGKLALQERPPAGTLQKLVSEAKAQLRDAQDFWISLPGTLCSEKLAMSSASDERCWNGMAKGRYLPEVMGDGLANQINNPEVEVDITKPDMTIRQQIMQLKIMTNRLRGAYNGNDLDFQDASDDGSGSGSGEGCPDEMCGRKVGRKSASSRTPLTHALPGLSEREGQQTSAAAPTPPQASPLLLLGLALALPAVAPRGR.

The first 23 residues, 1-23 (MELRARGWWLLYAAAVLVACARG), serve as a signal peptide directing secretion. Cystine bridges form between Cys32–Cys68, Cys62–Cys256, Cys69–Cys259, Cys191–Cys343, Cys246–Cys279, Cys268–Cys415, and Cys272–Cys401. Asn79 and Asn116 each carry an N-linked (GlcNAc...) asparagine glycan. The interval 478-539 (FQDASDDGSG…SAAAPTPPQA (62 aa)) is disordered. O-linked (Xyl...) (heparan sulfate) serine glycans are attached at residues Ser486, Ser488, and Ser490. A lipid anchor (GPI-anchor amidated serine) is attached at Ser530. The propeptide at 531 to 559 (AAAPTPPQASPLLLLGLALALPAVAPRGR) is removed in mature form.

It belongs to the glypican family. S-nitrosylated in a Cu(2+)-dependent manner. Nitric acid (NO) is released from the nitrosylated cysteines by ascorbate or by some other reducing agent, in a Cu(2+) or Zn(2+) dependent manner. This free nitric oxide is then capable of cleaving the heparan sulfate side chains. Post-translationally, N- and O-glycosylated. N-glycosylation is mainly of the complex type containing sialic acid. O-glycosylated with heparan sulfate. The heparan sulfate chains can be cleaved either by the action of heparanase or, degraded by a deaminative process that uses nitric oxide (NO) released from the S-nitrosylated cysteines. This process is triggered by ascorbate, or by some other reducing agent, in a Cu(2+)- or Zn(2+) dependent manner. Cu(2+) ions are provided by ceruloproteins such as APP, PRNP or CP which associate with GCP1 in intracellular compartments or lipid rafts. In terms of processing, shed from the cell surface probably by further cleavage.

The protein resides in the cell membrane. It localises to the endosome. The protein localises to the secreted. It is found in the extracellular space. Its function is as follows. Cell surface proteoglycan that bears heparan sulfate. Binds, via the heparan sulfate side chains, alpha-4 (V) collagen and participates in Schwann cell myelination. May act as a catalyst in increasing the rate of conversion of prion protein PRPN (C) to PRNP (Sc) via associating (via the heparan sulfate side chains) with both forms of PRPN, targeting them to lipid rafts and facilitating their interaction. Required for proper skeletal muscle differentiation by sequestering FGF2 in lipid rafts preventing its binding to receptors (FGFRs) and inhibiting the FGF-mediated signaling. In Bos taurus (Bovine), this protein is Glypican-1 (GPC1).